A 351-amino-acid chain; its full sequence is Homeobox-leucine zipper protein HOX23 (351 aa).

The disordered stretch occupies residues 34–128 (LQDHAHGGHG…SFESGNKLEP (95 aa)). Over residues 56 to 65 (SPFLPDLAMD) the composition is skewed to low complexity. A DNA-binding region (homeobox) is located at residues 101–160 (GGEKKRRLSVEQVRTLERSFESGNKLEPERKAQLARALGLQPRQVAIWFQNRRARWKTKQ). Residues 114 to 128 (RTLERSFESGNKLEP) are compositionally biased toward basic and acidic residues. The interval 159-203 (KQLEKDFDALRRQLDAARAENDALLSLNSKLHAEIVALKGGAAAA) is leucine-zipper. Residues 227-263 (EASCSNRSENSSEINLDISRPAPPPPPPPANESPVNR) form a disordered region. The segment covering 228 to 240 (ASCSNRSENSSEI) has biased composition (polar residues). Pro residues predominate over residues 247–257 (PAPPPPPPPAN).

The protein belongs to the HD-ZIP homeobox family. Class I subfamily. In terms of tissue distribution, expressed in seedlings, roots, stems, leaf sheaths and panicles.

It localises to the nucleus. Its function is as follows. Probable transcription factor. The chain is Homeobox-leucine zipper protein HOX23 (HOX23) from Oryza sativa subsp. indica (Rice).